An 837-amino-acid chain; its full sequence is PE-PGRS family protein PE_PGRS4 (837 aa).

Positions 4-94 (VIAAPEVIAA…GAYAAAEAAA (91 aa)) constitute a PE domain. The segment covering 811 to 825 (NGGKAGGTPGAGGTS) has biased composition (gly residues). The disordered stretch occupies residues 811-837 (NGGKAGGTPGAGGTSGLIIGENGLNGL). Over residues 826–837 (GLIIGENGLNGL) the composition is skewed to low complexity.

The protein belongs to the mycobacterial PE family. PGRS subfamily.

The sequence is that of PE-PGRS family protein PE_PGRS4 from Mycobacterium tuberculosis (strain ATCC 25618 / H37Rv).